The chain runs to 220 residues: Gene 32 protein (220 aa).

Residues 184–205 (NSAGGNGNAPGGGGAGAQVSAQ) form a disordered region. Positions 187 to 199 (GGNGNAPGGGGAG) are enriched in gly residues.

This is Gene 32 protein (32) from Mycobacterium (Mycobacteriophage L5).